Here is a 429-residue protein sequence, read N- to C-terminus: S-adenosylmethionine synthase (429 aa).

His-14 contributes to the ATP binding site. Mg(2+) is bound at residue Asp-16. Glu-42 lines the K(+) pocket. Residues Glu-55 and Gln-98 each coordinate L-methionine. Positions Gln-98–Arg-108 are flexible loop. ATP contacts are provided by residues Asp-165–Lys-167, Lys-252–Phe-253, Asp-261, Arg-267–Lys-268, Ala-284, and Lys-288. Residue Asp-261 participates in L-methionine binding. Lys-292 provides a ligand contact to L-methionine.

Belongs to the AdoMet synthase family. Homotetramer; dimer of dimers. Mg(2+) is required as a cofactor. Requires K(+) as cofactor.

Its subcellular location is the cytoplasm. It catalyses the reaction L-methionine + ATP + H2O = S-adenosyl-L-methionine + phosphate + diphosphate. It participates in amino-acid biosynthesis; S-adenosyl-L-methionine biosynthesis; S-adenosyl-L-methionine from L-methionine: step 1/1. Catalyzes the formation of S-adenosylmethionine (AdoMet) from methionine and ATP. The overall synthetic reaction is composed of two sequential steps, AdoMet formation and the subsequent tripolyphosphate hydrolysis which occurs prior to release of AdoMet from the enzyme. The protein is S-adenosylmethionine synthase of Porphyromonas gingivalis (strain ATCC BAA-308 / W83).